The following is a 135-amino-acid chain: Large ribosomal subunit protein uL16c (135 aa).

The protein belongs to the universal ribosomal protein uL16 family. In terms of assembly, part of the 50S ribosomal subunit.

The protein localises to the plastid. It localises to the chloroplast. The protein is Large ribosomal subunit protein uL16c of Vitis vinifera (Grape).